Reading from the N-terminus, the 298-residue chain is NADH-cytochrome b5 reductase 2 (298 aa).

Residues 15-38 (FVLPVAAAAVGLASYSFTSSSFIA) traverse the membrane as a helical segment. Residues 49–153 (DEWIDLKLIS…KGPFVKWKWE (105 aa)) enclose the FAD-binding FR-type domain. 156–191 (QFKSIALIGGGTGITPLYQLIHEITKNPADKTQVSL) lines the FAD pocket.

This sequence belongs to the flavoprotein pyridine nucleotide cytochrome reductase family. FAD is required as a cofactor.

Its subcellular location is the mitochondrion outer membrane. The catalysed reaction is 2 Fe(III)-[cytochrome b5] + NADH = 2 Fe(II)-[cytochrome b5] + NAD(+) + H(+). May mediate the reduction of outer membrane cytochrome b5. This is NADH-cytochrome b5 reductase 2 (MCR1) from Scheffersomyces stipitis (strain ATCC 58785 / CBS 6054 / NBRC 10063 / NRRL Y-11545) (Yeast).